We begin with the raw amino-acid sequence, 172 residues long: Single-stranded DNA-binding protein 2 (172 aa).

One can recognise an SSB domain in the interval 6–111 (VNKVILVGHI…VIVNVGGTMQ (106 aa)). A DNA-binding region spans residues 55–61 (WHRVVVF). The tract at residues 113–172 (LGRHNSQPQQEPQTPPTAAKGEGKAVKGAGNAAKGKNAAAPQQPPAQPDPAYDFDDDIPF) is disordered. A compositionally biased stretch (low complexity) spans 119 to 153 (QPQQEPQTPPTAAKGEGKAVKGAGNAAKGKNAAAP). The Important for interaction with partner proteins motif lies at 167 to 172 (DDDIPF).

In terms of assembly, homotetramer.

In terms of biological role, plays an important role in DNA replication, recombination and repair. Binds to ssDNA and to an array of partner proteins to recruit them to their sites of action during DNA metabolism. The chain is Single-stranded DNA-binding protein 2 (ssb2) from Salmonella typhimurium (strain LT2 / SGSC1412 / ATCC 700720).